The primary structure comprises 149 residues: 3-dehydroquinate dehydratase (149 aa).

The active-site Proton acceptor is Tyr26. Asn77, His83, and Asp90 together coordinate substrate. Catalysis depends on His103, which acts as the Proton donor. Substrate-binding positions include 104–105 and Arg114; that span reads LS.

This sequence belongs to the type-II 3-dehydroquinase family. As to quaternary structure, homododecamer.

It catalyses the reaction 3-dehydroquinate = 3-dehydroshikimate + H2O. It functions in the pathway metabolic intermediate biosynthesis; chorismate biosynthesis; chorismate from D-erythrose 4-phosphate and phosphoenolpyruvate: step 3/7. Catalyzes a trans-dehydration via an enolate intermediate. The sequence is that of 3-dehydroquinate dehydratase from Haemophilus influenzae (strain PittEE).